Here is a 187-residue protein sequence, read N- to C-terminus: Ribose 1,5-bisphosphate phosphokinase PhnN (187 aa).

An ATP-binding site is contributed by 10–17 (GPSGSGKD).

This sequence belongs to the ribose 1,5-bisphosphokinase family.

The catalysed reaction is alpha-D-ribose 1,5-bisphosphate + ATP = 5-phospho-alpha-D-ribose 1-diphosphate + ADP. Its pathway is metabolic intermediate biosynthesis; 5-phospho-alpha-D-ribose 1-diphosphate biosynthesis; 5-phospho-alpha-D-ribose 1-diphosphate from D-ribose 5-phosphate (route II): step 3/3. Functionally, catalyzes the phosphorylation of ribose 1,5-bisphosphate to 5-phospho-D-ribosyl alpha-1-diphosphate (PRPP). In Klebsiella pneumoniae subsp. pneumoniae (strain ATCC 700721 / MGH 78578), this protein is Ribose 1,5-bisphosphate phosphokinase PhnN.